The primary structure comprises 433 residues: Keratin, type I cytoskeletal 47 kDa (433 aa).

A head region spans residues 1-73 (MSYSTRSISQ…AFNVSVTSNN (73 aa)). Positions 74 to 109 (GKETMQNLNDRLANYLDRVRSLEQANHELELKIREY) are coil 1A. Positions 74–385 (GKETMQNLND…RLLEGEDTRF (312 aa)) constitute an IF rod domain. Residues 110–127 (LDKKAAVGSLDYSGYYNT) form a linker 1 region. Residues 128–219 (INLLRSQIND…KNHEEELAVV (92 aa)) form a coil 1B region. The interval 220–242 (RSSARGNVDVQVDSAPPVDLAQI) is linker 12. The coil 2 stretch occupies residues 243 to 381 (MADVRSQYES…ATYRRLLEGE (139 aa)). A tail region spans residues 382-433 (DTRFSQTETQKAVTIVSKEQSSSSIKKVKTVIEEVVDGKVVSSRVEELTETS).

The protein belongs to the intermediate filament family. In terms of assembly, heterotetramer of two type I and two type II keratins.

This is Keratin, type I cytoskeletal 47 kDa (xk70a) from Xenopus laevis (African clawed frog).